We begin with the raw amino-acid sequence, 379 residues long: Homoserine O-succinyltransferase (379 aa).

One can recognise an AB hydrolase-1 domain in the interval 51–360 (NAVLICHALS…DAPQGHDAFL (310 aa)). The active-site Nucleophile is the Ser157. Position 227 (Arg227) interacts with substrate. Active-site residues include Asp323 and His356. Asp357 contributes to the substrate binding site.

It belongs to the AB hydrolase superfamily. MetX family. Homodimer.

Its subcellular location is the cytoplasm. It carries out the reaction L-homoserine + succinyl-CoA = O-succinyl-L-homoserine + CoA. It functions in the pathway amino-acid biosynthesis; L-methionine biosynthesis via de novo pathway; O-succinyl-L-homoserine from L-homoserine: step 1/1. Transfers a succinyl group from succinyl-CoA to L-homoserine, forming succinyl-L-homoserine. The polypeptide is Homoserine O-succinyltransferase (Pseudomonas aeruginosa (strain UCBPP-PA14)).